A 415-amino-acid polypeptide reads, in one-letter code: Multidrug resistance protein MdtA (415 aa).

The first 21 residues, 1-21 (MKGSYKSRWVIVIVVVIAAIA), serve as a signal peptide directing secretion. Residues 31 to 46 (DSQSAAPGATKQAQQS) show a composition bias toward polar residues. Disordered regions lie at residues 31–56 (DSQS…GMRA) and 391–415 (VEAQ…GARS). Basic and acidic residues predominate over residues 399–415 (PEEKATSREYAKKGARS).

Belongs to the membrane fusion protein (MFP) (TC 8.A.1) family. As to quaternary structure, part of a tripartite efflux system composed of MdtA, MdtB and MdtC.

The protein localises to the cell inner membrane. Its function is as follows. The MdtABC tripartite complex confers resistance against novobiocin and deoxycholate. The protein is Multidrug resistance protein MdtA of Escherichia coli O45:K1 (strain S88 / ExPEC).